A 124-amino-acid polypeptide reads, in one-letter code: Small ribosomal subunit protein uS12 (124 aa).

A 3-methylthioaspartic acid modification is found at D89. The interval 103–124 is disordered; it reads DTAGVKDRRQGRSKYGAKRPKD. Residues 113-124 are compositionally biased toward basic residues; that stretch reads GRSKYGAKRPKD.

It belongs to the universal ribosomal protein uS12 family. In terms of assembly, part of the 30S ribosomal subunit. Contacts proteins S8 and S17. May interact with IF1 in the 30S initiation complex.

Functionally, with S4 and S5 plays an important role in translational accuracy. Interacts with and stabilizes bases of the 16S rRNA that are involved in tRNA selection in the A site and with the mRNA backbone. Located at the interface of the 30S and 50S subunits, it traverses the body of the 30S subunit contacting proteins on the other side and probably holding the rRNA structure together. The combined cluster of proteins S8, S12 and S17 appears to hold together the shoulder and platform of the 30S subunit. This Acaryochloris marina (strain MBIC 11017) protein is Small ribosomal subunit protein uS12.